Here is a 483-residue protein sequence, read N- to C-terminus: General transcription factor IIH subunit 4 (483 aa).

A disordered region spans residues 93-117; the sequence is PQQQQSSQQSSSQQQQQQQQQQQQT. The segment covering 94–116 has biased composition (low complexity); that stretch reads QQQQSSQQSSSQQQQQQQQQQQQ.

Belongs to the TFB2 family. As to quaternary structure, component of the 7-subunit TFIIH core complex composed of XPB/repB, XPD/repD, gtf2h1, gtf2h2, gtf2h3, gtf2h4 and gtf2h5, which is active in NER. The core complex associates with the 3-subunit CDK-activating kinase (CAK) module composed of cycH/cyclin H, cdk7 and mnat1 to form the 10-subunit holoenzyme (holo-TFIIH) active in transcription.

It is found in the nucleus. Functionally, component of the general transcription and DNA repair factor IIH (TFIIH) core complex, which is involved in general and transcription-coupled nucleotide excision repair (NER) of damaged DNA and, when complexed to CAK, in RNA transcription by RNA polymerase II. In NER, TFIIH acts by opening DNA around the lesion to allow the excision of the damaged oligonucleotide and its replacement by a new DNA fragment. In transcription, TFIIH has an essential role in transcription initiation. When the pre-initiation complex (PIC) has been established, TFIIH is required for promoter opening and promoter escape. Phosphorylation of the C-terminal tail (CTD) of the largest subunit of RNA polymerase II by the kinase module CAK controls the initiation of transcription. This is General transcription factor IIH subunit 4 (gtf2h4) from Dictyostelium discoideum (Social amoeba).